Here is a 70-residue protein sequence, read N- to C-terminus: Turripeptide Ici9.2 (70 aa).

Residues 1-20 form the signal peptide; that stretch reads MKVYCLLLVLLVGLVSQAQG. The 50-residue stretch at 21–70 folds into the Kazal-like domain; sequence QLDKKCQTMCTMEYLPVCGSDGTTYPNKCTLTSTACVNQMDITVLHNGEC. Disulfide bonds link Cys26/Cys56, Cys30/Cys49, and Cys38/Cys70.

It belongs to the conopeptide P-like superfamily. Expressed by the venom duct.

It localises to the secreted. Functionally, acts as a neurotoxin by inhibiting an ion channel. May also act as a serine protease inhibitor, since it possess the kazal serine protease inhibitor signature. The chain is Turripeptide Ici9.2 from Iotyrris cingulifera (Sea snail).